The following is a 156-amino-acid chain: Small ribosomal subunit protein uS7 (156 aa).

It belongs to the universal ribosomal protein uS7 family. As to quaternary structure, part of the 30S ribosomal subunit. Contacts proteins S9 and S11.

One of the primary rRNA binding proteins, it binds directly to 16S rRNA where it nucleates assembly of the head domain of the 30S subunit. Is located at the subunit interface close to the decoding center, probably blocks exit of the E-site tRNA. This is Small ribosomal subunit protein uS7 from Burkholderia ambifaria (strain MC40-6).